The primary structure comprises 242 residues: C-reactive protein 3.3 (242 aa).

An N-terminal signal peptide occupies residues 1–24 (MKTFHGPTCGTAVSLCLLLFLTSA). The Pentraxin (PTX) domain maps to 30–241 (ITSKVKFPPS…GVVLSPNEIC (212 aa)). 2 residues coordinate phosphocholine: T60 and Y63. 2 cysteine pairs are disulfide-bonded: C62–C125 and C112–C144. Ca(2+) contacts are provided by D85 and N86. A glycan (N-linked (GlcNAc...) asparagine) is linked at N147. Ca(2+) contacts are provided by Q169, D170, and Q180. Cysteines 207 and 241 form a disulfide.

The protein belongs to the pentraxin family. Homopentamer. Pentraxin (or pentaxin) have a discoid arrangement of 5 non-covalently bound subunits. Requires Ca(2+) as cofactor.

It localises to the secreted. Functionally, might serve the role of immunoglobulins. The chain is C-reactive protein 3.3 from Limulus polyphemus (Atlantic horseshoe crab).